The sequence spans 450 residues: UDP-N-acetylmuramoylalanine--D-glutamate ligase (450 aa).

Residue 116-122 coordinates ATP; the sequence is GSNGKTT.

Belongs to the MurCDEF family.

Its subcellular location is the cytoplasm. The catalysed reaction is UDP-N-acetyl-alpha-D-muramoyl-L-alanine + D-glutamate + ATP = UDP-N-acetyl-alpha-D-muramoyl-L-alanyl-D-glutamate + ADP + phosphate + H(+). It functions in the pathway cell wall biogenesis; peptidoglycan biosynthesis. Functionally, cell wall formation. Catalyzes the addition of glutamate to the nucleotide precursor UDP-N-acetylmuramoyl-L-alanine (UMA). The sequence is that of UDP-N-acetylmuramoylalanine--D-glutamate ligase from Dechloromonas aromatica (strain RCB).